Consider the following 39-residue polypeptide: Neuropeptide F (39 aa).

Phenylalanine amide is present on Phe39.

It belongs to the NPY family. As to expression, neuronal somata and fibers.

It localises to the secreted. Functionally, may have an important physiological role in neuroregulation. This is Neuropeptide F from Cornu aspersum (Brown garden snail).